We begin with the raw amino-acid sequence, 370 residues long: Gibberellin 3-beta-dioxygenase 2-1 (370 aa).

Residues 205 to 306 form the Fe2OG dioxygenase domain; the sequence is MTATMHLNWY…RISLGYFLGP (102 aa). Fe cation is bound by residues His-229, Asp-231, and His-287. Arg-297 is an active-site residue.

Belongs to the iron/ascorbate-dependent oxidoreductase family. GA3OX subfamily. L-ascorbate serves as cofactor. Requires Fe cation as cofactor. Expressed in internodes, nodes and the ear of the elongating stem.

The catalysed reaction is gibberellin A20 + 2-oxoglutarate + O2 = gibberellin A1 + succinate + CO2. Functionally, converts the inactive gibberellin precursors GA9 and GA20 in the bioactives gibberellins GA4 and GA1. Also accepts GA15, GA44, the 2,3-unsaturated GA5 and 2,3-dihydroGA9 as substrate. No activity with GA12, GA53, GA24, GA19 and GA25. Also possesses 2-beta-hydroxylase, 2,3-desaturase, 2,3-epoxidase and 13-hydroxylase activities. In Triticum aestivum (Wheat), this protein is Gibberellin 3-beta-dioxygenase 2-1 (GA3ox2-1).